The following is a 2006-amino-acid chain: Supporter of activation of yellow protein (2006 aa).

8 disordered regions span residues 1–208 (MNDL…RRVE), 313–347 (MPAK…SSLA), 458–564 (EEKP…AQSQ), 744–794 (DTQD…DPAR), 821–916 (DLEG…KSRR), 929–1029 (VSVG…NNNS), 1044–1082 (CSSS…SDPL), and 1099–1196 (QQLR…SAVA). Positions 10 to 60 (VAATSSSGSESGTAVESAAATSTAGSAGAAGRPQSNCSANSNAKSVAASST) are enriched in low complexity. Over residues 67–81 (VSSTSSPAQRDQQLN) the composition is skewed to polar residues. Over residues 118–128 (SPPPTLPPPTT) the composition is skewed to pro residues. Low complexity predominate over residues 129 to 168 (PCDDAPSTTGASASASSASGEAPSAASAAGAAGGPMAATA). A compositionally biased stretch (polar residues) spans 189 to 199 (ANPNSNANESQ). Low complexity predominate over residues 321-347 (LSSLSPASASSSSASSSSSSSSSSSLA). Residues 485-494 (GGESNSSSQE) show a composition bias toward polar residues. Basic and acidic residues predominate over residues 525 to 534 (SLSKEHDPKI). Positions 543 to 563 (ASNGIASGGSKASKASKSAQS) are enriched in low complexity. The segment covering 744-758 (DTQDNNNENHLKRTN) has biased composition (basic and acidic residues). Polar residues-rich tracts occupy residues 759-769 (SEGNESPSSRL) and 828-844 (PPTQ…NGAL). Residues 861–870 (PATPQPPPVA) are compositionally biased toward pro residues. Composition is skewed to basic and acidic residues over residues 936–945 (ADMKAKEKES) and 963–972 (ESPKTRDHRP). Composition is skewed to low complexity over residues 978–990 (RTTT…LQPT) and 1018–1029 (SSESESNNNNNS). The span at 1053–1080 (GAAANQQVIGGSGSSSMLPPTTILSSSD) shows a compositional bias: polar residues. The span at 1103–1112 (SSRPSSISCG) shows a compositional bias: low complexity. The segment covering 1147-1158 (GRGRGRRSRGGR) has biased composition (basic residues). Low complexity predominate over residues 1161-1173 (GSSSVDRAVSVGG). An SAY region spans residues 1340–1573 (MIQEQVALYL…PPTDLMAQLL (234 aa)). Residues 1579 to 1685 (AVGSDEIKTS…AGSEDEDGNE (107 aa)) form a disordered region. Composition is skewed to low complexity over residues 1627-1652 (TASS…SSDT) and 1660-1677 (FSST…SGAG). The PHD-type 1; degenerate zinc-finger motif lies at 1694 to 1751 (TCGVCLRSQHRNARDMPEAFIRCYTCRKRVHPSCVDMPPRMVGRVRNYNWQCAGCKCC). The PHD-type 2; degenerate zinc finger occupies 1753–1796 (KCRSSQRPGKMLYCEQCDRGYHIYCLGLRTVPDGRWSCERCCFC). Residues 1887 to 1911 (TSAQTDDSPMPSPGLTTNGGRALSP) form a disordered region.

Belongs to the SAYP family. As to expression, widely expressed. Highly expressed in ovary. Expressed in nursing cells and growing oocytes at all stages of development and accumulates in mature oocytes. Expressed in the nuclei of syncytium blastoderm of early embryos and in the nuclei of different tissues of late embryos, larvae, and adults.

The protein resides in the nucleus. It is found in the cytoplasm. It localises to the chromosome. Its function is as follows. Essential transcription regulator during early development. Coactivates transcription of some euchromatin genes and repress transcription in of euchromatin genes translocated to heterochromatin. The polypeptide is Supporter of activation of yellow protein (e(y)3) (Drosophila melanogaster (Fruit fly)).